We begin with the raw amino-acid sequence, 366 residues long: Lipase member J (366 aa).

The active-site Nucleophile is the Ser-141. Catalysis depends on charge relay system residues Asp-312 and His-341.

It belongs to the AB hydrolase superfamily. Lipase family.

This is Lipase member J (LIPJ) from Homo sapiens (Human).